We begin with the raw amino-acid sequence, 597 residues long: DNA mismatch repair protein MutL (597 aa).

It belongs to the DNA mismatch repair MutL/HexB family.

Functionally, this protein is involved in the repair of mismatches in DNA. It is required for dam-dependent methyl-directed DNA mismatch repair. May act as a 'molecular matchmaker', a protein that promotes the formation of a stable complex between two or more DNA-binding proteins in an ATP-dependent manner without itself being part of a final effector complex. This Rhodopseudomonas palustris (strain BisB5) protein is DNA mismatch repair protein MutL.